The sequence spans 230 residues: MIDKPINRCPMEQNTEKFSIPNSQFSILTSYFPDLTDRQKEQYAALYDLYTDWNAKINVISRKDIENLYPHHVLHSLGITDMLRFKPGSSVMDLGTGGGFPGIPLAILFPETHFHLVDSIGKKIKVGQAVAEAIGLENVSFRHCRGEEEKQLFDFVVSRAVMPLADLVKIVRKNIKKEQINALPNGLICLKGGELAHEILPFRNQAISMDLKDHFKEEFFETKKVVYVPL.

Residues glycine 95, phenylalanine 100, 146 to 147, and arginine 159 each bind S-adenosyl-L-methionine; that span reads GE.

The protein belongs to the methyltransferase superfamily. RNA methyltransferase RsmG family.

Its subcellular location is the cytoplasm. Functionally, specifically methylates the N7 position of a guanine in 16S rRNA. This Parabacteroides distasonis (strain ATCC 8503 / DSM 20701 / CIP 104284 / JCM 5825 / NCTC 11152) protein is Ribosomal RNA small subunit methyltransferase G.